Consider the following 368-residue polypeptide: Propane 2-monooxygenase, hydroxylase component small subunit (368 aa).

This sequence belongs to the TmoE/XamoE family. The propane 2-monooxygenase multicomponent enzyme system is composed of an electron transfer component and a monooxygenase component interacting with the effector protein PrmD. The electron transfer component is composed of a reductase (PrmB), and the monooxygenase component is formed by a large subunit (PrmA) and a small subunit (PrmC). Probably requires the presence of the chaperonin-like protein PrmG to ensure a productive folding, resulting of a soluble PrmC, which leads to the active form of PrmABCD.

The enzyme catalyses propane + NADH + O2 + H(+) = propan-2-ol + NAD(+) + H2O. In terms of biological role, component of the propane 2-monooxygenase multicomponent enzyme system which is involved in the degradation of propane via the O2-dependent hydroxylation of propane. Also able to catalyze the oxidation the water contaminant N-nitrosodimethylamine (NDMA). The chain is Propane 2-monooxygenase, hydroxylase component small subunit from Rhodococcus jostii (strain RHA1).